The primary structure comprises 157 residues: Ribosome-binding factor A (157 aa).

The tract at residues 127 to 157 (QQQFGSEEASVEDEVLGDDVADDADETEGKD) is disordered. Residues 135–157 (ASVEDEVLGDDVADDADETEGKD) are compositionally biased toward acidic residues.

It belongs to the RbfA family. Monomer. Binds 30S ribosomal subunits, but not 50S ribosomal subunits or 70S ribosomes.

It is found in the cytoplasm. Its function is as follows. One of several proteins that assist in the late maturation steps of the functional core of the 30S ribosomal subunit. Associates with free 30S ribosomal subunits (but not with 30S subunits that are part of 70S ribosomes or polysomes). Required for efficient processing of 16S rRNA. May interact with the 5'-terminal helix region of 16S rRNA. The protein is Ribosome-binding factor A of Shewanella baltica (strain OS195).